The following is a 359-amino-acid chain: Histamine H2 receptor (359 aa).

Residues 1–22 (MAPNGTASSFCLDSTACKITIT) lie on the Extracellular side of the membrane. Asn4 carries N-linked (GlcNAc...) asparagine glycosylation. A helical membrane pass occupies residues 23 to 44 (VVLAVLILITVAGNVVVCLAVG). Topologically, residues 45–57 (LNRRLRNLTNCFI) are cytoplasmic. A helical membrane pass occupies residues 58 to 81 (VSLAITDLLLGLLVLPFSAIYQLS). At 82-92 (CKWSFGKVFCN) the chain is on the extracellular side. A disulfide bond links Cys91 and Cys174. The helical transmembrane segment at 93–114 (IYTSLDVMLCTASILNLFMISL) threads the bilayer. Residues 115 to 134 (DRYCAVMDPLRYPVLVTPVR) lie on the Cytoplasmic side of the membrane. A helical membrane pass occupies residues 135-159 (VAISLVLIWVISITLSFLSIHLGWN). Over 160-180 (SRNETSKGNHTTSKCKVQVNE) the chain is Extracellular. The helical transmembrane segment at 181 to 204 (VYGLVDGLVTFYLPLLIMCITYYR) threads the bilayer. At 205–234 (IFKVARDQAKRINHISSWKAATIREHKATV) the chain is on the cytoplasmic side. A helical membrane pass occupies residues 235–258 (TLAAVMGAFIICWFPYFTAFVYRG). Topologically, residues 259–267 (LRGDDAINE) are extracellular. A helical membrane pass occupies residues 268–289 (VLEAIVLWLGYANSALNPILYA). Residues 290–359 (ALNRDFRTGY…VTAPQGATDR (70 aa)) lie on the Cytoplasmic side of the membrane. The S-palmitoyl cysteine moiety is linked to residue Cys305. Residues 316 to 340 (SLRSNASQLSRTQSREPRQQEEKPL) are disordered. Positions 317–327 (LRSNASQLSRT) are enriched in polar residues. Residues 328 to 340 (QSREPRQQEEKPL) are compositionally biased toward basic and acidic residues.

This sequence belongs to the G-protein coupled receptor 1 family.

Its subcellular location is the cell membrane. The H2 subclass of histamine receptors mediates gastric acid secretion. Also appears to regulate gastrointestinal motility and intestinal secretion. Possible role in regulating cell growth and differentiation. The activity of this receptor is mediated by G proteins which activate adenylyl cyclase and, through a separate G protein-dependent mechanism, the phosphoinositide/protein kinase (PKC) signaling pathway. In Gorilla gorilla gorilla (Western lowland gorilla), this protein is Histamine H2 receptor (HRH2).